The primary structure comprises 245 residues: Protein FAM133B (245 aa).

Disordered stretches follow at residues 19-38 (SRGP…NRPR) and 69-245 (WKKE…SDSP). The segment covering 69 to 80 (WKKELEKHREKL) has biased composition (basic and acidic residues). Position 82 is a phosphoserine (Ser-82). Basic residues predominate over residues 89-102 (KKRQKKKKEKKKSG). The segment covering 103–119 (RYSSSSSSSSDSSSSSS) has biased composition (low complexity). A compositionally biased stretch (basic residues) spans 128–140 (QTKRRKKKKSHCH). Residues 165–176 (KDITEREKDTKG) show a composition bias toward basic and acidic residues. Phosphoserine is present on residues Ser-190, Ser-191, Ser-193, and Ser-195. Basic and acidic residues predominate over residues 209 to 219 (SGEERERTTDK). Residues 220–237 (AKKRRKHKKHSKKKKKKA) are compositionally biased toward basic residues.

The protein belongs to the FAM133 family.

This Rattus norvegicus (Rat) protein is Protein FAM133B (Fam133b).